The chain runs to 522 residues: Maturase K (522 aa).

The protein belongs to the intron maturase 2 family. MatK subfamily.

Its subcellular location is the plastid. It is found in the chloroplast. Functionally, usually encoded in the trnK tRNA gene intron. Probably assists in splicing its own and other chloroplast group II introns. The polypeptide is Maturase K (Dianella ensifolia (Flax lily)).